The sequence spans 518 residues: Retinal dehydrogenase 2 (518 aa).

Residue tyrosine 168 is modified to Phosphotyrosine. NAD(+)-binding positions include 184 to 186 (IPW), 210 to 213 (KPAE), and 264 to 266 (STE). The active-site Proton acceptor is the glutamate 286. Cysteine 320 acts as the Nucleophile in catalysis. Serine 351 carries the post-translational modification Phosphoserine. NAD(+) is bound by residues 366-370 (KQYNK) and glutamate 417.

Belongs to the aldehyde dehydrogenase family. As to quaternary structure, homotetramer.

Its subcellular location is the cytoplasm. The catalysed reaction is retinal + NAD(+) + H2O = retinoate + NADH + 2 H(+). The enzyme catalyses all-trans-retinal + NAD(+) + H2O = all-trans-retinoate + NADH + 2 H(+). It catalyses the reaction all-trans-13,14-dihydroretinal + NAD(+) + H2O = all-trans-13,14-dihydroretinoate + NADH + 2 H(+). The protein operates within cofactor metabolism; retinol metabolism. Catalyzes the NAD-dependent oxidation of aldehyde substrates, such as all-trans-retinal and all-trans-13,14-dihydroretinal, to their corresponding carboxylic acids, all-trans-retinoate and all-trans-13,14-dihydroretinoate, respectively. Retinoate signaling is critical for the transcriptional control of many genes, for instance it is crucial for initiation of meiosis in both male and female. Recognizes retinal as substrate, both in its free form and when bound to cellular retinol-binding protein. Lacks activity with benzaldehyde, acetaldehyde and octanal. Displays complete lack of activity with citral. The polypeptide is Retinal dehydrogenase 2 (Aldh1a2) (Mus musculus (Mouse)).